We begin with the raw amino-acid sequence, 352 residues long: S-adenosylmethionine:tRNA ribosyltransferase-isomerase (352 aa).

Belongs to the QueA family. In terms of assembly, monomer.

Its subcellular location is the cytoplasm. It carries out the reaction 7-aminomethyl-7-carbaguanosine(34) in tRNA + S-adenosyl-L-methionine = epoxyqueuosine(34) in tRNA + adenine + L-methionine + 2 H(+). It participates in tRNA modification; tRNA-queuosine biosynthesis. Functionally, transfers and isomerizes the ribose moiety from AdoMet to the 7-aminomethyl group of 7-deazaguanine (preQ1-tRNA) to give epoxyqueuosine (oQ-tRNA). This chain is S-adenosylmethionine:tRNA ribosyltransferase-isomerase, found in Vibrio cholerae serotype O1 (strain ATCC 39315 / El Tor Inaba N16961).